A 64-amino-acid chain; its full sequence is Large ribosomal subunit protein uL29 (64 aa).

Belongs to the universal ribosomal protein uL29 family.

The protein is Large ribosomal subunit protein uL29 of Solidesulfovibrio magneticus (strain ATCC 700980 / DSM 13731 / RS-1) (Desulfovibrio magneticus).